The primary structure comprises 72 residues: MKTQNVLLSFGIVFLMISFSSETYIRDFITRRPPFGNIGKRSLKDVESLDFLFDPTFTAADLAVLENALEDY.

The N-terminal stretch at 1–23 is a signal peptide; the sequence is MKTQNVLLSFGIVFLMISFSSET. Isoleucine amide is present on I38. Positions 42-72 are excised as a propeptide; it reads SLKDVESLDFLFDPTFTAADLAVLENALEDY.

It belongs to the non-disulfide-bridged peptide (NDBP) superfamily. Short antimicrobial peptide (group 4) family. Expressed by the venom gland.

It localises to the secreted. Antimicrobial peptide. This Chaerilus tricostatus (Scorpion) protein is Peptide Ctri9194.